The primary structure comprises 540 residues: Cobalt-factor III methyltransferase (540 aa).

Cys402, Cys405, Cys439, and Cys443 together coordinate [4Fe-4S] cluster.

The protein in the N-terminal section; belongs to the precorrin methyltransferase family. Requires [4Fe-4S] cluster as cofactor.

The catalysed reaction is Co(II)-factor III + AH2 + S-adenosyl-L-methionine = Co-precorrin-4 + A + S-adenosyl-L-homocysteine. It participates in cofactor biosynthesis; adenosylcobalamin biosynthesis. Its function is as follows. Methyltransferase that catalyzes the reduction, ring contraction and methylation of C-17 in cobalt-factor III to form cobalt-precorrin-4. Is also able to convert cobalt-precorrin-3 to cobalt-precorrin-4. This chain is Cobalt-factor III methyltransferase (cbiH60), found in Priestia megaterium (Bacillus megaterium).